The chain runs to 30 residues: Cycloviolin-C (30 aa).

Residues 1 to 30 constitute a cross-link (cyclopeptide (Gly-Asn)); sequence GIPCGESCVFIPCLTTVAGCSCKNKVCYRN. Disulfide bonds link C4-C20, C8-C22, and C13-C27.

Post-translationally, this is a cyclic peptide.

Probably participates in a plant defense mechanism. Has anti-HIV activity. In Leonia cymosa (Sacha uba), this protein is Cycloviolin-C.